A 126-amino-acid chain; its full sequence is RutC family protein y4sK (126 aa).

It belongs to the RutC family.

This is RutC family protein y4sK from Sinorhizobium fredii (strain NBRC 101917 / NGR234).